The primary structure comprises 423 residues: tRNA(Ile)-lysidine synthase (423 aa).

18-23 lines the ATP pocket; that stretch reads SGGADS.

The protein belongs to the tRNA(Ile)-lysidine synthase family.

It localises to the cytoplasm. The catalysed reaction is cytidine(34) in tRNA(Ile2) + L-lysine + ATP = lysidine(34) in tRNA(Ile2) + AMP + diphosphate + H(+). In terms of biological role, ligates lysine onto the cytidine present at position 34 of the AUA codon-specific tRNA(Ile) that contains the anticodon CAU, in an ATP-dependent manner. Cytidine is converted to lysidine, thus changing the amino acid specificity of the tRNA from methionine to isoleucine. This chain is tRNA(Ile)-lysidine synthase, found in Aromatoleum aromaticum (strain DSM 19018 / LMG 30748 / EbN1) (Azoarcus sp. (strain EbN1)).